The chain runs to 364 residues: GDSL esterase/lipase EXL3 (364 aa).

A signal peptide spans 1-32 (MKDNSSWSCSCSWSSWKICLLSVLFLTETITA). Residue Ser-50 is the Nucleophile of the active site. Active-site residues include Asp-339 and His-342.

Belongs to the 'GDSL' lipolytic enzyme family. In terms of tissue distribution, flower buds.

It localises to the secreted. In Arabidopsis thaliana (Mouse-ear cress), this protein is GDSL esterase/lipase EXL3 (EXL3).